A 255-amino-acid chain; its full sequence is Syntaxin-6 (255 aa).

Position 2 is an N-acetylserine (serine 2). The residue at position 2 (serine 2) is a Phosphoserine. The required for interaction with VPS51 stretch occupies residues 2–168 (SMEDPFFVVK…QAQQQLIVEQ (167 aa)). The Cytoplasmic portion of the chain corresponds to 2–234 (SMEDPFFVVK…VSHMTSDRRQ (233 aa)). A coiled-coil region spans residues 41-74 (EEIDWTTNELRNNLRSIEWDLEDLDETISIVEAN). Residues serine 129 and serine 152 each carry the phosphoserine modification. A t-SNARE coiled-coil homology domain is found at 163–225 (QLIVEQQDEQ…DNVMKKLAKV (63 aa)). Residues 235 to 255 (WCAIAILFAVLVVVLILFLVL) traverse the membrane as a helical; Anchor for type IV membrane protein segment.

It belongs to the syntaxin family. Identified in a complex containing STX6, STX12 and VAMP4. This complex also includes VTI1A. Binds EEA1. Interacts with VPS45A and GOPC. Interacts with MARCHF2; the interaction promotes MARCHF2-mediated ubiquitination and degradation of CFTR. Interacts with MARCHF3. Interacts with BLTP3B (via C-terminal coiled-coil domain). Interacts with BAIAP3; this interaction is increased in the presence of calcium. Interacts with VPS13B.

The protein localises to the golgi apparatus membrane. It localises to the golgi apparatus. Its subcellular location is the trans-Golgi network membrane. The protein resides in the recycling endosome membrane. Functionally, SNARE promoting movement of transport vesicles to target membranes. Targets endosomes to the trans-Golgi network, and may therefore function in retrograde trafficking. Together with SNARE STX12, promotes movement of vesicles from endosomes to the cell membrane, and may therefore function in the endocytic recycling pathway. The chain is Syntaxin-6 (Stx6) from Mus musculus (Mouse).